The primary structure comprises 376 residues: Methylthioribose-1-phosphate isomerase (376 aa).

Catalysis depends on D256, which acts as the Proton donor.

It belongs to the eIF-2B alpha/beta/delta subunits family. MtnA subfamily.

It is found in the cytoplasm. Its subcellular location is the nucleus. The enzyme catalyses 5-(methylsulfanyl)-alpha-D-ribose 1-phosphate = 5-(methylsulfanyl)-D-ribulose 1-phosphate. The protein operates within amino-acid biosynthesis; L-methionine biosynthesis via salvage pathway; L-methionine from S-methyl-5-thio-alpha-D-ribose 1-phosphate: step 1/6. Functionally, catalyzes the interconversion of methylthioribose-1-phosphate (MTR-1-P) into methylthioribulose-1-phosphate (MTRu-1-P). The protein is Methylthioribose-1-phosphate isomerase of Vitis vinifera (Grape).